A 345-amino-acid polypeptide reads, in one-letter code: Protein SHI RELATED SEQUENCE 7 (345 aa).

Residues 7 to 28 are disordered; that stretch reads LGGRDHNKQDHHQEKDHNEDKS. Residues 9–28 show a composition bias toward basic and acidic residues; sequence GRDHNKQDHHQEKDHNEDKS. 6 residues coordinate Zn(2+): cysteine 119, cysteine 122, cysteine 130, cysteine 135, cysteine 139, and cysteine 146. Positions 119–146 form a DNA-binding region, zn(2)-C6 fungal-type; degenerate; that stretch reads CQDCGNQAKKDCPHMRCRTCCKSRGFDC. The tract at residues 168-200 is disordered; sequence AVLPAKRIRDANSRGGGDDDDDDKEDEKNDSCG. The Required for homo- and heterodimerization signature appears at 256–259; that stretch reads IGGH.

This sequence belongs to the SHI protein family. Mainly expressed in the filaments of flowers, the shoot apex regions and pollen. Also present in leaves.

It localises to the nucleus. Its function is as follows. Transcription activator that binds DNA on 5'-ACTCTAC-3' and promotes auxin homeostasis-regulating gene expression (e.g. YUC genes), as well as genes affecting stamen development, cell expansion and timing of flowering. Synergistically with other SHI-related proteins, regulates gynoecium, stamen and leaf development in a dose-dependent manner, controlling apical-basal patterning. Promotes style and stigma formation, and influences vascular development during gynoecium development. May also have a role in the formation and/or maintenance of the shoot apical meristem (SAM). Regulates anther dehiscence and floral development. This chain is Protein SHI RELATED SEQUENCE 7 (SRS7), found in Arabidopsis thaliana (Mouse-ear cress).